The primary structure comprises 547 residues: Chaperonin GroEL (547 aa).

Residues 30–33 (TLGP), lysine 51, 87–91 (DGTTT), glycine 415, and aspartate 496 each bind ATP.

Belongs to the chaperonin (HSP60) family. In terms of assembly, forms a cylinder of 14 subunits composed of two heptameric rings stacked back-to-back. Interacts with the co-chaperonin GroES.

The protein resides in the cytoplasm. The enzyme catalyses ATP + H2O + a folded polypeptide = ADP + phosphate + an unfolded polypeptide.. Together with its co-chaperonin GroES, plays an essential role in assisting protein folding. The GroEL-GroES system forms a nano-cage that allows encapsulation of the non-native substrate proteins and provides a physical environment optimized to promote and accelerate protein folding. The protein is Chaperonin GroEL of Haemophilus ducreyi (strain 35000HP / ATCC 700724).